The following is a 427-amino-acid chain: Dihydroorotase (427 aa).

His-60 and His-62 together coordinate Zn(2+). Substrate is bound by residues 62 to 64 (HLR) and Asn-94. Zn(2+) is bound by residues Asp-152, His-179, and His-232. Asn-278 serves as a coordination point for substrate. Zn(2+) is bound at residue Asp-305. Residue Asp-305 is part of the active site. Residues His-309 and 323–324 (FG) contribute to the substrate site.

This sequence belongs to the metallo-dependent hydrolases superfamily. DHOase family. Class I DHOase subfamily. Zn(2+) serves as cofactor.

The catalysed reaction is (S)-dihydroorotate + H2O = N-carbamoyl-L-aspartate + H(+). It participates in pyrimidine metabolism; UMP biosynthesis via de novo pathway; (S)-dihydroorotate from bicarbonate: step 3/3. In terms of biological role, catalyzes the reversible cyclization of carbamoyl aspartate to dihydroorotate. This chain is Dihydroorotase, found in Geobacillus sp. (strain WCH70).